The chain runs to 711 residues: Dendrin (711 aa).

Disordered regions lie at residues 1-22, 49-273, 324-446, and 479-677; these read MLDG…DEES, APSR…KKRL, DLNS…SQGL, and PSGV…AELS. Over residues 75 to 84 the composition is skewed to pro residues; sequence PGSPQPPPRR. The stretch at 102-134 forms a coiled coil; it reads LAEVRAREQEKRKAASQEREAKETERKRRKAGG. The span at 105–127 shows a compositional bias: basic and acidic residues; that stretch reads VRAREQEKRKAASQEREAKETER. A nuclear localization region spans residues 113–131; that stretch reads RKAASQEREAKETERKRRK. Residues 150-161 show a composition bias toward low complexity; sequence APRVAQLAGLPA. Residues 186 to 236 form an interaction with MAGI2 region; it reads GSAWAGPWGGRRPGPPSYEAHLLLRGSAGTAPRRRWDRPPPYVAPPSYEGP. Composition is skewed to low complexity over residues 252–262 and 346–356; these read PTSSAPAATPA and APAGSATAAPC. The tract at residues 341-436 is interaction with ACTN1; the sequence is AGTEIAPAGS…LEGWKATRRA (96 aa). The residue at position 389 (Ser-389) is a Phosphoserine. Residues 408 to 709 are interaction with CD2AP and NPHS1; the sequence is GGTGWRESLG…IRGTQQGNRK (302 aa). The segment covering 529 to 546 has biased composition (basic and acidic residues); the sequence is GEAEGGRPGDSTLEERTF.

In terms of assembly, forms a ternary complex with MAGI2 and SH3KBP1; recruits DDN to the cytoplasm. Interacts with MAGI1. Interacts with ACTN1 and may interact with WWC1. Interacts with the podocyte slit diaphragm proteins CD2AP, NPHS1 and NPHS2; the interaction with CD2AP and NPHS1 is direct. Specifically expressed in brain and kidney. Expressed in kidney glomerular capillary loops (at protein level).

It localises to the cell projection. The protein localises to the dendritic spine membrane. The protein resides in the cytoplasm. It is found in the endoplasmic reticulum membrane. Its subcellular location is the perikaryon. It localises to the nucleus. Functionally, promotes apoptosis of kidney glomerular podocytes. Podocytes are highly specialized cells essential to the ultrafiltration of blood, resulting in the extraction of urine and the retention of protein. The chain is Dendrin (DDN) from Homo sapiens (Human).